Here is a 295-residue protein sequence, read N- to C-terminus: Nucleotide-binding protein CMS1991 (295 aa).

19-26 is a binding site for ATP; the sequence is GMSGAGRS. Residue 70-73 participates in GTP binding; the sequence is DVRG.

This sequence belongs to the RapZ-like family.

Its function is as follows. Displays ATPase and GTPase activities. The sequence is that of Nucleotide-binding protein CMS1991 from Clavibacter sepedonicus (Clavibacter michiganensis subsp. sepedonicus).